The sequence spans 321 residues: L-Ala-D/L-Glu epimerase (321 aa).

The substrate site is built by T124 and K149. K151 acts as the Proton acceptor; specific for (R)-substrate epimerization in catalysis. Mg(2+) contacts are provided by D176, E202, and D225. K247 (proton acceptor; specific for (S)-substrate epimerization) is an active-site residue. The substrate site is built by C275, D297, and D299.

Belongs to the mandelate racemase/muconate lactonizing enzyme family. As to quaternary structure, monomer. Mg(2+) serves as cofactor.

The enzyme catalyses L-alanyl-L-glutamate = L-alanyl-D-glutamate. Its pathway is cell wall biogenesis; peptidoglycan recycling. Its function is as follows. Catalyzes the epimerization of L-Ala-D-Glu to L-Ala-L-Glu and has a role in the recycling of the murein peptide, of which L-Ala-D-Glu is a component. Is also able to catalyze the reverse reaction and the epimerization of all the L-Ala-X dipeptides, except L-Ala-L-Arg, L-Ala-L-Lys and L-Ala-L-Pro. Is also active with L-Gly-L-Glu, L-Phe-L-Glu, and L-Ser-L-Glu, but not with L-Glu-L-Glu, L-Lys-L-Glu, L-Pro-L-Glu, L-Lys-L-Ala, or D-Ala-D-Ala. The protein is L-Ala-D/L-Glu epimerase (ycjG) of Escherichia coli (strain K12).